A 178-amino-acid chain; its full sequence is Caveolin-1 (178 aa).

Ser-2 is modified (N-acetylserine). Ser-2 bears the Phosphoserine mark. A required for homooligomerization region spans residues 2 to 94 (SGGKYIDSEG…WKASFTTFTV (93 aa)). At 2 to 104 (SGGKYIDSEG…TKYWFYRLLS (103 aa)) the chain is on the cytoplasmic side. Position 5 is an N6-acetyllysine; alternate (Lys-5). Residue Lys-5 forms a Glycyl lysine isopeptide (Lys-Gly) (interchain with G-Cter in ubiquitin); alternate linkage. At Tyr-6 the chain carries Phosphotyrosine. Ser-9 carries the post-translational modification Phosphoserine. Phosphotyrosine; by ABL1 is present on Tyr-14. A Phosphotyrosine modification is found at Tyr-25. Residues Lys-26, Lys-30, Lys-39, Lys-47, and Lys-57 each participate in a glycyl lysine isopeptide (Lys-Gly) (interchain with G-Cter in ubiquitin) cross-link. Residues 82–94 (DGIWKASFTTFTV) are interaction with CAVIN3. An intramembrane region (helical) is located at residues 105–125 (ALFGIPMALIWGIYFAILSFL). Topologically, residues 126 to 178 (HIWAVVPCIRSYLIEIQCISRIYSICIHTFCDPLFEAIGKIFSNVRIALQKEI) are cytoplasmic. Positions 131–142 (VPCIRSYLIEIQ) are interacts with SPRY1, SPRY2, SPRY3 and SPRY4. 3 S-palmitoyl cysteine lipidation sites follow: Cys-133, Cys-143, and Cys-156. Residues 149–160 (SICIHTFCDPLF) are interacts with SPRY1, SPRY2, and SPRY4. Positions 167–178 (FSNVRIALQKEI) are interacts with SPRY1, SPRY2, SPRY3 and SPRY4.

The protein belongs to the caveolin family. Homooligomer. Interacts with GLIPR2. Interacts with NOSTRIN. Interacts with SNAP25 and STX1A. Interacts (via the N-terminus) with DPP4; the interaction is direct. Interacts with CTNNB1, CDH1 and JUP. Interacts with PACSIN2; this interaction induces membrane tubulation. Interacts with SLC7A9. Interacts with BMX and BTK. Interacts with TGFBR1. Interacts with CAVIN3 (via leucine-zipper domain) in a cholesterol-sensitive manner. Interacts with CAVIN1. Interacts with EHD2 in a cholesterol-dependent manner. Forms a ternary complex with UBXN6 and VCP; mediates CAV1 targeting to lysosomes for degradation. Interacts with ABCG1; this interaction regulates ABCG1-mediated cholesterol efflux. Interacts with NEU3; this interaction enhances NEU3 sialidase activity within caveola. Interacts (via C-terminus) with SPRY1, SPRY2 (via C-terminus), SPRY3, and SPRY4. Interacts with IGFBP5; this interaction allows trafficking of IGFBP5 from the plasma membrane to the nucleus. Phosphorylated at Tyr-14 by ABL1 in response to oxidative stress. In terms of processing, ubiquitinated. Undergo monoubiquitination and multi- and/or polyubiquitination. Monoubiquitination of N-terminal lysines promotes integration in a ternary complex with UBXN6 and VCP which promotes oligomeric CAV1 targeting to lysosomes for degradation. Ubiquitinated by ZNRF1; leading to degradation and modulation of the TLR4-mediated immune response.

Its subcellular location is the golgi apparatus membrane. The protein resides in the cell membrane. The protein localises to the membrane. It is found in the caveola. It localises to the membrane raft. May act as a scaffolding protein within caveolar membranes. Forms a stable heterooligomeric complex with CAV2 that targets to lipid rafts and drives caveolae formation. Mediates the recruitment of CAVIN proteins (CAVIN1/2/3/4) to the caveolae. Interacts directly with G-protein alpha subunits and can functionally regulate their activity. Involved in the costimulatory signal essential for T-cell receptor (TCR)-mediated T-cell activation. Its binding to DPP4 induces T-cell proliferation and NF-kappa-B activation in a T-cell receptor/CD3-dependent manner. Recruits CTNNB1 to caveolar membranes and may regulate CTNNB1-mediated signaling through the Wnt pathway. Negatively regulates TGFB1-mediated activation of SMAD2/3 by mediating the internalization of TGFBR1 from membrane rafts leading to its subsequent degradation. Binds 20(S)-hydroxycholesterol (20(S)-OHC). The polypeptide is Caveolin-1 (CAV1) (Didelphis virginiana (North American opossum)).